Reading from the N-terminus, the 172-residue chain is uncharacterized protein (172 aa).

This is an uncharacterized protein from Haemophilus influenzae (strain ATCC 51907 / DSM 11121 / KW20 / Rd).